A 396-amino-acid chain; its full sequence is Acetylornithine aminotransferase 2 (396 aa).

Pyridoxal 5'-phosphate-binding positions include 102-103 (GA) and phenylalanine 134. Residue arginine 137 coordinates N(2)-acetyl-L-ornithine. 219–222 (DEVQ) contacts pyridoxal 5'-phosphate. Lysine 248 bears the N6-(pyridoxal phosphate)lysine mark. A pyridoxal 5'-phosphate-binding site is contributed by threonine 276.

It belongs to the class-III pyridoxal-phosphate-dependent aminotransferase family. ArgD subfamily. Homodimer. Requires pyridoxal 5'-phosphate as cofactor.

Its subcellular location is the cytoplasm. It catalyses the reaction N(2)-acetyl-L-ornithine + 2-oxoglutarate = N-acetyl-L-glutamate 5-semialdehyde + L-glutamate. It participates in amino-acid biosynthesis; L-arginine biosynthesis; N(2)-acetyl-L-ornithine from L-glutamate: step 4/4. This is Acetylornithine aminotransferase 2 from Bordetella bronchiseptica (strain ATCC BAA-588 / NCTC 13252 / RB50) (Alcaligenes bronchisepticus).